Reading from the N-terminus, the 1940-residue chain is Myosin-2 (1940 aa).

In terms of domain architecture, Myosin N-terminal SH3-like spans 33–82 (DAKTSVFVAEPKESFVKGTIQSREGGKVTVKTEGGATLTVKEDQVFPMNP). Phosphothreonine is present on residues T64 and T69. Residues 86–783 (DKIEDMAMMT…LLGLLEEMRD (698 aa)) form the Myosin motor domain. K130 is subject to N6,N6,N6-trimethyllysine. Position 179-186 (179-186 (GESGAGKT)) interacts with ATP. Y389 carries the post-translational modification Phosphotyrosine. The residue at position 392 (S392) is a Phosphoserine. The residue at position 419 (T419) is a Phosphothreonine. Position 625 is a phosphoserine (S625). Residues 660–682 (LNKLMTNLRSTHPHFVRCIIPNE) are actin-binding. H758 is subject to Pros-methylhistidine. Residues 762–776 (KFGHTKVFFKAGLLG) are actin-binding. The 30-residue stretch at 786-815 (LAQLMTRTQARCRGFLARVEYQKMVERRES) folds into the IQ domain. A coiled-coil region spans residues 844–1940 (LLKSAETEKE…EVHTKIISEE (1097 aa)). Phosphoserine is present on residues S1093, S1097, S1163, and S1238. A Phosphothreonine modification is found at T1242. S1244 is modified (phosphoserine). Phosphothreonine occurs at positions 1256 and 1287. 4 positions are modified to phosphoserine: S1289, S1293, S1304, and S1307. Position 1465 is a phosphotyrosine (Y1465). T1468 is subject to Phosphothreonine. Y1493 is modified (phosphotyrosine). At S1496 the chain carries Phosphoserine. T1502 is modified (phosphothreonine). Phosphoserine is present on S1515. T1518 carries the phosphothreonine modification. A phosphoserine mark is found at S1543, S1555, S1575, S1601, S1715, and S1727. Phosphothreonine is present on residues T1731 and T1737. The tract at residues 1886-1905 (QAEEAEEQSNTNLSKFRKLQ) is disordered.

It belongs to the TRAFAC class myosin-kinesin ATPase superfamily. Myosin family. In terms of assembly, muscle myosin is a hexameric protein that consists of 2 heavy chain subunits (MHC), 2 alkali light chain subunits (MLC) and 2 regulatory light chain subunits (MLC-2). Interacts with GCSAM.

It localises to the cytoplasm. It is found in the myofibril. Myosins are actin-based motor molecules with ATPase activity essential for muscle contraction. This Bos taurus (Bovine) protein is Myosin-2 (MYH2).